Consider the following 60-residue polypeptide: Arabinogalactan protein 14 (60 aa).

The first 28 residues, 1–28, serve as a signal peptide directing secretion; it reads MEAMKMKLYVVVLVAVIAFSTVHQTVAA. Residues Pro-32, Pro-34, and Pro-36 each carry the 4-hydroxyproline modification. Residues Pro-32, Pro-34, and Pro-36 are each glycosylated (O-linked (Ara...) hydroxyproline). A lipid anchor (GPI-anchor amidated serine) is attached at Ser-38. Positions 39–60 are cleaved as a propeptide — removed in mature form; it reads DASSFIPTFFASVAVMAFGFFF.

Belongs to the AG-peptide AGP family. In terms of processing, contains 4-hydroxyproline; hydroxylated on Pro-32, Pro-34 and Pro-36. O-glycosylated on hydroxyprolines; noncontiguous hydroxylproline residues are glycosylated with arabinogalactan.

It is found in the cell membrane. Functionally, proteoglycan that seems to be implicated in diverse developmental roles such as differentiation, cell-cell recognition, embryogenesis and programmed cell death. Involved in the regulation of root hair elongation. In Arabidopsis thaliana (Mouse-ear cress), this protein is Arabinogalactan protein 14.